The chain runs to 100 residues: Replication restart protein PriB (100 aa).

Positions 1-100 constitute an SSB domain; sequence MTNRIELSGV…VLHADKISQI (100 aa).

The protein belongs to the PriB family. Homodimer. Interacts with PriA and DnaT. Component of the replication restart primosome. Primosome assembly occurs via a 'hand-off' mechanism. PriA binds to replication forks, subsequently PriB then DnaT bind; DnaT then displaces ssDNA to generate the helicase loading substrate.

Involved in the restart of stalled replication forks, which reloads the replicative helicase on sites other than the origin of replication; the PriA-PriB pathway is the major replication restart pathway. During primosome assembly it facilitates complex formation between PriA and DnaT on DNA; stabilizes PriA on DNA. Stimulates the DNA unwinding activity of PriA helicase. The chain is Replication restart protein PriB from Vibrio cholerae serotype O1 (strain ATCC 39315 / El Tor Inaba N16961).